The primary structure comprises 263 residues: Probable WRKY transcription factor 62 (263 aa).

The disordered stretch occupies residues 59-104; that stretch reads DHQDDQSNNSSPQDSSPVLESSRKPLHKRGRKTSMAESSDYHRHES. The span at 64 to 74 shows a compositional bias: low complexity; that stretch reads QSNNSSPQDSS. A DNA-binding region (WRKY) is located at residues 104 to 174; it reads SSTPIYHDGF…GQHICQLHQA (71 aa).

The protein belongs to the WRKY group III family.

The protein resides in the nucleus. Its function is as follows. Transcription factor. Interacts specifically with the W box (5'-(T)TGAC[CT]-3'), a frequently occurring elicitor-responsive cis-acting element. This Arabidopsis thaliana (Mouse-ear cress) protein is Probable WRKY transcription factor 62 (WRKY62).